Here is a 483-residue protein sequence, read N- to C-terminus: UDP-N-acetylmuramoylalanine--D-glutamate ligase (483 aa).

119-125 (GTNGKTT) serves as a coordination point for ATP.

Belongs to the MurCDEF family.

It localises to the cytoplasm. It catalyses the reaction UDP-N-acetyl-alpha-D-muramoyl-L-alanine + D-glutamate + ATP = UDP-N-acetyl-alpha-D-muramoyl-L-alanyl-D-glutamate + ADP + phosphate + H(+). The protein operates within cell wall biogenesis; peptidoglycan biosynthesis. Its function is as follows. Cell wall formation. Catalyzes the addition of glutamate to the nucleotide precursor UDP-N-acetylmuramoyl-L-alanine (UMA). The polypeptide is UDP-N-acetylmuramoylalanine--D-glutamate ligase (Mycolicibacterium vanbaalenii (strain DSM 7251 / JCM 13017 / BCRC 16820 / KCTC 9966 / NRRL B-24157 / PYR-1) (Mycobacterium vanbaalenii)).